The sequence spans 121 residues: Large ribosomal subunit protein uL18 (121 aa).

This sequence belongs to the universal ribosomal protein uL18 family. As to quaternary structure, part of the 50S ribosomal subunit; part of the 5S rRNA/L5/L18/L25 subcomplex. Contacts the 5S and 23S rRNAs.

Functionally, this is one of the proteins that bind and probably mediate the attachment of the 5S RNA into the large ribosomal subunit, where it forms part of the central protuberance. The polypeptide is Large ribosomal subunit protein uL18 (Desulfotalea psychrophila (strain LSv54 / DSM 12343)).